A 469-amino-acid polypeptide reads, in one-letter code: Glutamate--tRNA ligase (469 aa).

The 'HIGH' region motif lies at 11-21 (PSPTGFIHLGN). The 'KMSKS' region motif lies at 243–247 (KMSKR). Lys246 contacts ATP.

Belongs to the class-I aminoacyl-tRNA synthetase family. Glutamate--tRNA ligase type 1 subfamily. In terms of assembly, monomer.

It is found in the cytoplasm. The enzyme catalyses tRNA(Glu) + L-glutamate + ATP = L-glutamyl-tRNA(Glu) + AMP + diphosphate. Its function is as follows. Catalyzes the attachment of glutamate to tRNA(Glu) in a two-step reaction: glutamate is first activated by ATP to form Glu-AMP and then transferred to the acceptor end of tRNA(Glu). The sequence is that of Glutamate--tRNA ligase from Burkholderia orbicola (strain AU 1054).